We begin with the raw amino-acid sequence, 286 residues long: Putative sugar uptake protein lin0215 (286 aa).

Helical transmembrane passes span 4–26 (MIALIPALLWGTVPLIITKFGGS), 33–55 (GMTLGALTFAVIVFFFTDPVYTL), 114–136 (LRIILGFIALALIVGGIFLTSYA), 149–167 (GLITLVISSLGYVGLVVLI), 177–194 (AILPQAIGMVLSALIMTH), 207–226 (LLLIIPGMIWAAGNVAMVHA), 230–252 (VGVATGFSLSQLGVVISTIGGIV), and 264–283 (LYVIVGVVLVVLGGILIGVA).

The protein belongs to the GRP transporter (TC 2.A.7.5) family.

The protein localises to the cell membrane. The polypeptide is Putative sugar uptake protein lin0215 (Listeria innocua serovar 6a (strain ATCC BAA-680 / CLIP 11262)).